Reading from the N-terminus, the 258-residue chain is UPF0246 protein plu0566 (258 aa).

Belongs to the UPF0246 family.

The polypeptide is UPF0246 protein plu0566 (Photorhabdus laumondii subsp. laumondii (strain DSM 15139 / CIP 105565 / TT01) (Photorhabdus luminescens subsp. laumondii)).